A 67-amino-acid chain; its full sequence is ATP synthase F(0) complex subunit 8 (67 aa).

A helical transmembrane segment spans residues 8–24 (TWLIMILSMILTLFITF). Lysine 54 carries the N6-acetyllysine; alternate modification. Lysine 54 bears the N6-succinyllysine; alternate mark. Lysine 57 is subject to N6-acetyllysine.

It belongs to the ATPase protein 8 family. Component of the ATP synthase complex composed at least of ATP5F1A/subunit alpha, ATP5F1B/subunit beta, ATP5MC1/subunit c (homooctomer), MT-ATP6/subunit a, MT-ATP8/subunit 8, ATP5ME/subunit e, ATP5MF/subunit f, ATP5MG/subunit g, ATP5MK/subunit k, ATP5MJ/subunit j, ATP5F1C/subunit gamma, ATP5F1D/subunit delta, ATP5F1E/subunit epsilon, ATP5PF/subunit F6, ATP5PB/subunit b, ATP5PD/subunit d, ATP5PO/subunit OSCP. ATP synthase complex consists of a soluble F(1) head domain (subunits alpha(3) and beta(3)) - the catalytic core - and a membrane F(0) domain - the membrane proton channel (subunits c, a, 8, e, f, g, k and j). These two domains are linked by a central stalk (subunits gamma, delta, and epsilon) rotating inside the F1 region and a stationary peripheral stalk (subunits F6, b, d, and OSCP). Interacts with PRICKLE3.

It is found in the mitochondrion membrane. Its function is as follows. Subunit 8, of the mitochondrial membrane ATP synthase complex (F(1)F(0) ATP synthase or Complex V) that produces ATP from ADP in the presence of a proton gradient across the membrane which is generated by electron transport complexes of the respiratory chain. ATP synthase complex consist of a soluble F(1) head domain - the catalytic core - and a membrane F(1) domain - the membrane proton channel. These two domains are linked by a central stalk rotating inside the F(1) region and a stationary peripheral stalk. During catalysis, ATP synthesis in the catalytic domain of F(1) is coupled via a rotary mechanism of the central stalk subunits to proton translocation. In vivo, can only synthesize ATP although its ATP hydrolase activity can be activated artificially in vitro. Part of the complex F(0) domain. The chain is ATP synthase F(0) complex subunit 8 from Phoca vitulina (Harbor seal).